Reading from the N-terminus, the 92-residue chain is DNA-binding protein HU-alpha (92 aa).

This sequence belongs to the bacterial histone-like protein family. In terms of assembly, heterodimer of an alpha and a beta chain.

Histone-like DNA-binding protein which is capable of wrapping DNA to stabilize it, and thus to prevent its denaturation under extreme environmental conditions. The protein is DNA-binding protein HU-alpha (hupA) of Burkholderia pseudomallei (strain K96243).